The following is a 101-amino-acid chain: NAD(P)H-quinone oxidoreductase subunit 4L, chloroplastic (101 aa).

3 helical membrane-spanning segments follow: residues 2–22 (MLEH…YGLI), 32–52 (MCLE…SDLF), and 61–81 (IFSI…PAIV).

This sequence belongs to the complex I subunit 4L family. NDH is composed of at least 16 different subunits, 5 of which are encoded in the nucleus.

It localises to the plastid. It is found in the chloroplast thylakoid membrane. It catalyses the reaction a plastoquinone + NADH + (n+1) H(+)(in) = a plastoquinol + NAD(+) + n H(+)(out). The catalysed reaction is a plastoquinone + NADPH + (n+1) H(+)(in) = a plastoquinol + NADP(+) + n H(+)(out). In terms of biological role, NDH shuttles electrons from NAD(P)H:plastoquinone, via FMN and iron-sulfur (Fe-S) centers, to quinones in the photosynthetic chain and possibly in a chloroplast respiratory chain. The immediate electron acceptor for the enzyme in this species is believed to be plastoquinone. Couples the redox reaction to proton translocation, and thus conserves the redox energy in a proton gradient. In Chloranthus spicatus (Chulantree), this protein is NAD(P)H-quinone oxidoreductase subunit 4L, chloroplastic.